The chain runs to 380 residues: Tryptophan 2,3-dioxygenase (380 aa).

Residues 57 to 61 (FIITH) and Arg-128 each bind substrate. His-313 provides a ligand contact to heme. Thr-328 lines the substrate pocket.

The protein belongs to the tryptophan 2,3-dioxygenase family. As to quaternary structure, homotetramer. Dimer of dimers. The cofactor is heme.

The enzyme catalyses L-tryptophan + O2 = N-formyl-L-kynurenine. The protein operates within amino-acid degradation; L-tryptophan degradation via kynurenine pathway; L-kynurenine from L-tryptophan: step 1/2. It functions in the pathway pigment biosynthesis; ommochrome biosynthesis. In terms of biological role, heme-dependent dioxygenase that catalyzes the oxidative cleavage of the L-tryptophan (L-Trp) pyrrole ring and converts L-tryptophan to N-formyl-L-kynurenine. Catalyzes the oxidative cleavage of the indole moiety. The polypeptide is Tryptophan 2,3-dioxygenase (Drosophila virilis (Fruit fly)).